Consider the following 540-residue polypeptide: Pentatricopeptide repeat-containing protein At3g29290 (540 aa).

PPR repeat units follow at residues N106–P140, N141–T175, H177–E205, D213–G247, T248–L282, R283–P317, N318–P352, D353–C387, N389–V423, S424–P458, N459–E487, and D489–P523.

It belongs to the PPR family. P subfamily.

The polypeptide is Pentatricopeptide repeat-containing protein At3g29290 (EMB2076) (Arabidopsis thaliana (Mouse-ear cress)).